We begin with the raw amino-acid sequence, 257 residues long: Homeobox protein ceh-36 (257 aa).

The segment covering 33 to 49 has biased composition (low complexity); sequence SATTSSTTMAPMAPNSE. Disordered regions lie at residues 33–63 and 113–156; these read SATTSSTTMAPMAPNSESGRRAGRRERTSFN and DRNN…GTPE. Positions 55 to 117 form a DNA-binding region, homeobox; the sequence is GRRERTSFNR…NRRAKDRNNK (63 aa). Positions 123-137 are enriched in low complexity; it reads HPGSTSSRSSNGSPH.

It belongs to the paired homeobox family. As to quaternary structure, interacts with sox-2. In terms of tissue distribution, expressed in ASE and AWC chemosensory neurons. Expressed left-right asymmetrically in the embryo, in the grandmother cell and the mother cell to the MI pharyngeal motorneuron but in neither analogous precursors of the e3D neuron.

It is found in the nucleus. In terms of biological role, probable transcription factor, acting as a progenitor identity factor regulating the development of lineally-related embryonic cells including glial, excretory and neuronal cells. Mediates chemosensory function of ASE and AWC neurons. In ASE neurons, required to diversify the fate of the ASEL neurons from the ASER neurons. Acts cell-autonomously to establish a neuronal left right asymmetry, possibly promoting asymmetric expression of the helix-loop-helix proteins ngn-1 and hlh-2. In cooperation with the transcription factor sox-2, required for the differentiation of AWC olfactory neurons. May regulate the expression of sox-2 in AWC olfactory neurons. This chain is Homeobox protein ceh-36, found in Caenorhabditis elegans.